The following is a 165-amino-acid chain: uncharacterized protein (165 aa).

Residues 7–29 (YPLIFTAFLLIAFCLIFFSYHLI) traverse the membrane as a helical segment.

It localises to the membrane. This is an uncharacterized protein from Bacillus subtilis (strain 168).